A 181-amino-acid polypeptide reads, in one-letter code: Malignant T-cell-amplified sequence 1 (181 aa).

At Thr81 the chain carries Phosphothreonine; by MAPK1 and MAPK3. Positions 92–171 (LPHQQVDKGA…IGIENIHYLN (80 aa)) constitute a PUA domain. Position 118 is a phosphoserine; by CDK1 (Ser118).

This sequence belongs to the MCTS1 family. As to quaternary structure, interacts (via PUA domain) with DENR; the complex regulates translation reinitiation. In terms of processing, phosphorylation is critical for stabilization and promotion of cell proliferation. In terms of tissue distribution, ubiquitous. Over-expressed in T-cell lymphoid cell lines and in non-Hodgkin lymphoma cell lines as well as in a subset of primary large B-cell lymphomas.

It localises to the cytoplasm. In terms of biological role, translation regulator forming a complex with DENR to promote translation reinitiation. Translation reinitiation is the process where the small ribosomal subunit remains attached to the mRNA following termination of translation of a regulatory upstream ORF (uORF), and resume scanning on the same mRNA molecule to initiate translation of a downstream ORF, usually the main ORF (mORF). The MCTS1/DENR complex is pivotal to two linked mechanisms essential for translation reinitiation. Firstly, the dissociation of deacylated tRNAs from post-termination 40S ribosomal complexes during ribosome recycling. Secondly, the recruitment in an EIF2-independent manner of aminoacylated initiator tRNA to P site of 40S ribosomes for a new round of translation. This regulatory mechanism governs the translation of more than 150 genes which translation reinitiation is MCTS1/DENR complex-dependent. Consequently, modulates various unrelated biological processes including cell cycle regulation and DNA damage signaling and repair. Notably, it positively regulates interferon gamma immunity to mycobacteria by enhancing the translation of JAK2. The polypeptide is Malignant T-cell-amplified sequence 1 (MCTS1) (Homo sapiens (Human)).